The primary structure comprises 428 residues: C4-dicarboxylate transport protein (428 aa).

8 helical membrane passes run 8–28 (SLYF…HFYP), 44–64 (LIKM…IAGM), 76–96 (VALL…LIIV), 142–162 (IGAF…LFGF), 184–204 (VIFG…FGAM), 222–242 (LIIC…GSIA), 326–346 (IVHQ…AAGV), and 352–372 (IVLA…LALI).

This sequence belongs to the dicarboxylate/amino acid:cation symporter (DAACS) (TC 2.A.23) family.

The protein localises to the cell inner membrane. Its function is as follows. Responsible for the transport of dicarboxylates such as succinate, fumarate, and malate from the periplasm across the membrane. The polypeptide is C4-dicarboxylate transport protein (Shigella dysenteriae serotype 1 (strain Sd197)).